Reading from the N-terminus, the 122-residue chain is Large ribosomal subunit protein uL14 (122 aa).

It belongs to the universal ribosomal protein uL14 family. Part of the 50S ribosomal subunit. Forms a cluster with proteins L3 and L19. In the 70S ribosome, L14 and L19 interact and together make contacts with the 16S rRNA in bridges B5 and B8.

In terms of biological role, binds to 23S rRNA. Forms part of two intersubunit bridges in the 70S ribosome. In Geobacillus sp. (strain WCH70), this protein is Large ribosomal subunit protein uL14.